The following is an 849-amino-acid chain: Probable ubiquitin carboxyl-terminal hydrolase 1 (849 aa).

In terms of domain architecture, DUSP spans 20-120; the sequence is QPASLPFQDS…EGLAIERKVL (101 aa). The USP domain occupies 279–848; sequence CGLYNLGNSC…SAYVLFYRAK (570 aa). Cysteine 288 (nucleophile) is an active-site residue. The Proton acceptor role is filled by histidine 806.

Belongs to the peptidase C19 family.

The catalysed reaction is Thiol-dependent hydrolysis of ester, thioester, amide, peptide and isopeptide bonds formed by the C-terminal Gly of ubiquitin (a 76-residue protein attached to proteins as an intracellular targeting signal).. The chain is Probable ubiquitin carboxyl-terminal hydrolase 1 (ubp1) from Schizosaccharomyces pombe (strain 972 / ATCC 24843) (Fission yeast).